A 349-amino-acid chain; its full sequence is Deoxyguanosinetriphosphate triphosphohydrolase-like protein (349 aa).

Residues 80 to 197 (RLTHTLEVAQ…VKYSDKIAYV (118 aa)) form the HD domain.

This sequence belongs to the dGTPase family. Type 2 subfamily.

This chain is Deoxyguanosinetriphosphate triphosphohydrolase-like protein, found in Clostridium tetani (strain Massachusetts / E88).